The chain runs to 174 residues: dCTP deaminase, dUMP-forming (174 aa).

DCTP is bound by residues 93-98 (RSSIGR), Asp111, 119-121 (TLE), Gln138, and Tyr151. Glu121 functions as the Proton donor/acceptor in the catalytic mechanism.

This sequence belongs to the dCTP deaminase family. In terms of assembly, homotrimer.

It carries out the reaction dCTP + 2 H2O = dUMP + NH4(+) + diphosphate. Its pathway is pyrimidine metabolism; dUMP biosynthesis; dUMP from dCTP: step 1/1. In terms of biological role, bifunctional enzyme that catalyzes both the deamination of dCTP to dUTP and the hydrolysis of dUTP to dUMP without releasing the toxic dUTP intermediate. This is dCTP deaminase, dUMP-forming from Leptospira biflexa serovar Patoc (strain Patoc 1 / Ames).